A 554-amino-acid chain; its full sequence is Glucose-6-phosphate isomerase (554 aa).

Glu359 acts as the Proton donor in catalysis. Residues His390 and Lys518 contribute to the active site.

Belongs to the GPI family.

It localises to the cytoplasm. The enzyme catalyses alpha-D-glucose 6-phosphate = beta-D-fructose 6-phosphate. The protein operates within carbohydrate biosynthesis; gluconeogenesis. It participates in carbohydrate degradation; glycolysis; D-glyceraldehyde 3-phosphate and glycerone phosphate from D-glucose: step 2/4. Functionally, catalyzes the reversible isomerization of glucose-6-phosphate to fructose-6-phosphate. The polypeptide is Glucose-6-phosphate isomerase (Pseudomonas fluorescens (strain ATCC BAA-477 / NRRL B-23932 / Pf-5)).